The chain runs to 1431 residues: DNA-directed RNA polymerase subunit beta' (1431 aa).

Zn(2+) contacts are provided by C66, C68, C81, and C84. The Mg(2+) site is built by D470, D472, and D474. C813, C887, C894, and C897 together coordinate Zn(2+).

This sequence belongs to the RNA polymerase beta' chain family. In terms of assembly, the RNAP catalytic core consists of 2 alpha, 1 beta, 1 beta' and 1 omega subunit. When a sigma factor is associated with the core the holoenzyme is formed, which can initiate transcription. It depends on Mg(2+) as a cofactor. Zn(2+) serves as cofactor.

It catalyses the reaction RNA(n) + a ribonucleoside 5'-triphosphate = RNA(n+1) + diphosphate. DNA-dependent RNA polymerase catalyzes the transcription of DNA into RNA using the four ribonucleoside triphosphates as substrates. The polypeptide is DNA-directed RNA polymerase subunit beta' (Parabacteroides distasonis (strain ATCC 8503 / DSM 20701 / CIP 104284 / JCM 5825 / NCTC 11152)).